The chain runs to 503 residues: Adenosine deaminase 2-A (503 aa).

Residues 1 to 24 (MHVLFLGDLMWIYLLLLCCASCNG) form the signal peptide. 2 residues coordinate Zn(2+): histidine 105 and histidine 107. Residue aspartate 108 coordinates substrate. The N-linked (GlcNAc...) asparagine glycan is linked to asparagine 120. Cysteine 130 and cysteine 152 are oxidised to a cystine. Asparagine 167 and asparagine 178 each carry an N-linked (GlcNAc...) asparagine glycan. Substrate is bound by residues 197–204 (WERFEQVF) and histidine 286. A glycan (N-linked (GlcNAc...) asparagine) is linked at asparagine 290. Glycine 319 contributes to the substrate binding site. Histidine 349 is a binding site for Zn(2+). The active-site Proton donor is the glutamate 352. Asparagine 371 carries an N-linked (GlcNAc...) asparagine glycan. The active-site Proton acceptor is the histidine 377. Position 434 (aspartate 434) interacts with Zn(2+). Aspartate 435 lines the substrate pocket.

It belongs to the metallo-dependent hydrolases superfamily. Adenosine and AMP deaminases family. ADGF subfamily. Requires Zn(2+) as cofactor.

The protein resides in the secreted. The enzyme catalyses adenosine + H2O + H(+) = inosine + NH4(+). Its function is as follows. Adenosine deaminase that may contribute to the degradation of extracellular adenosine, a signaling molecule that controls a variety of cellular responses. May play a role in the regulation of cell proliferation. This is Adenosine deaminase 2-A from Danio rerio (Zebrafish).